A 344-amino-acid polypeptide reads, in one-letter code: Lysophosphatidic acid receptor 6 (344 aa).

Topologically, residues 1-25 (MVSSNGSQCPYDDSFKYTLYGCMFS) are extracellular. Residue N5 is glycosylated (N-linked (GlcNAc...) asparagine). Residues 26–46 (MVFVLGLISNCVAIYIFICAL) form a helical membrane-spanning segment. Residues 47–56 (KVRNETTTYM) are Cytoplasmic-facing. A helical transmembrane segment spans residues 57-77 (INLAMSDLLFVFTLPFRIFYF). Residues 78–90 (ATRNWPFGDLLCK) are Extracellular-facing. Cysteines 89 and 168 form a disulfide. The helical transmembrane segment at 91–111 (ISVMLFYTNMYGSILFLTCIS) threads the bilayer. The Cytoplasmic portion of the chain corresponds to 112–134 (VDRFLAIVYPFKSKTLRTKRNAK). Residues 135–155 (IVCIAVWFTVMGGSAPAVFFQ) traverse the membrane as a helical segment. The Extracellular portion of the chain corresponds to 156 to 183 (STHSQGNNTSEACFENFPAATWKTYLSR). 2 N-linked (GlcNAc...) asparagine glycosylation sites follow: N162 and N163. Residues 184–204 (IVIFIEIVGFFIPLILNVTCS) traverse the membrane as a helical segment. Residues 205-230 (SMVLRTLNKPVTLSRSKMNKTKVLKM) are Cytoplasmic-facing. The helical transmembrane segment at 231–251 (IFVHLVIFCFCFVPYNINLIL) threads the bilayer. Topologically, residues 252–272 (YSLMRTQTFVNCSVVAAVRTM) are extracellular. A glycan (N-linked (GlcNAc...) asparagine) is linked at N262. The chain crosses the membrane as a helical span at residues 273-293 (YPITLCIAVSNCCFDPIVYYF). C284 carries the S-palmitoyl cysteine lipid modification. The Cytoplasmic segment spans residues 294–344 (TSDTIQNSIKMKNWSVRRSDSRFSEVQGTENFIQHNLQTLKNKIFDNESAI).

The protein belongs to the G-protein coupled receptor 1 family. Ubiquitously expressed. Detected in the hair follicles and skin (at protein level).

The protein localises to the cell membrane. Functionally, binds to oleoyl-L-alpha-lysophosphatidic acid (LPA). Intracellular cAMP is involved in the receptor activation. Important for the maintenance of hair growth and texture. The chain is Lysophosphatidic acid receptor 6 (Lpar6) from Mus musculus (Mouse).